We begin with the raw amino-acid sequence, 463 residues long: 23S rRNA (uracil(1939)-C(5))-methyltransferase RlmD (463 aa).

In terms of domain architecture, TRAM spans 14 to 78 (AVAPGSDPVV…PSYEQAHLLE (65 aa)). Residues cysteine 91, cysteine 97, cysteine 100, and cysteine 179 each coordinate [4Fe-4S] cluster. Residues glutamine 287, phenylalanine 316, asparagine 321, glutamate 337, asparagine 365, and aspartate 386 each contribute to the S-adenosyl-L-methionine site. Residue cysteine 419 is the Nucleophile of the active site.

The protein belongs to the class I-like SAM-binding methyltransferase superfamily. RNA M5U methyltransferase family. RlmD subfamily.

The catalysed reaction is uridine(1939) in 23S rRNA + S-adenosyl-L-methionine = 5-methyluridine(1939) in 23S rRNA + S-adenosyl-L-homocysteine + H(+). Catalyzes the formation of 5-methyl-uridine at position 1939 (m5U1939) in 23S rRNA. This Cupriavidus pinatubonensis (strain JMP 134 / LMG 1197) (Cupriavidus necator (strain JMP 134)) protein is 23S rRNA (uracil(1939)-C(5))-methyltransferase RlmD.